The following is a 107-amino-acid chain: N(4)-acetylcytidine amidohydrolase (107 aa).

Residues 9–105 (TFFEFLTPLI…KLFVIEYELI (97 aa)) enclose the ASCH domain. Catalysis depends on K23, which acts as the Proton acceptor. The active-site Nucleophile is T26. E76 serves as the catalytic Proton donor.

This sequence belongs to the N(4)-acetylcytidine amidohydrolase family.

The enzyme catalyses N(4)-acetylcytidine + H2O = cytidine + acetate + H(+). It catalyses the reaction N(4)-acetyl-2'-deoxycytidine + H2O = 2'-deoxycytidine + acetate + H(+). The catalysed reaction is N(4)-acetylcytosine + H2O = cytosine + acetate + H(+). Its function is as follows. Catalyzes the hydrolysis of N(4)-acetylcytidine (ac4C). This is N(4)-acetylcytidine amidohydrolase from Vibrio parahaemolyticus serotype O3:K6 (strain RIMD 2210633).